Here is a 512-residue protein sequence, read N- to C-terminus: Opioid growth factor receptor-like protein 1 (512 aa).

Disordered stretches follow at residues 1–72, 323–469, and 488–512; these read MGNI…ETGT, IWGP…TCCK, and SLSPGTSNSNVTELKVEGSETGPFT. 2 stretches are compositionally biased toward acidic residues: residues 28–54 and 62–71; these read GGEEEQQEAEEEEESEGTEQREDDNEE and TNEGGEEETG. Residues 328-337 show a composition bias toward basic and acidic residues; it reads DKQKADENKA. A compositionally biased stretch (basic residues) spans 347–361; it reads QKKHSHVEKKSRPAK. Residues 408–421 are compositionally biased toward polar residues; that stretch reads TVTSENNSSKTGQT. Residues 449–468 are compositionally biased toward basic and acidic residues; it reads RSLDTEHDLKRPEADRETCC. Residues 490-499 show a composition bias toward polar residues; sequence SPGTSNSNVT.

Belongs to the opioid growth factor receptor family.

This is Opioid growth factor receptor-like protein 1 (ogfrl1) from Xenopus tropicalis (Western clawed frog).